A 302-amino-acid polypeptide reads, in one-letter code: uncharacterized protein (302 aa).

Positions 1–52 (MLKKLKVVRLLVNHLIYCPSIFMPYSKNMKKKIWNKTSLGALFMLFGTALTA) are cleaved as a signal peptide.

The protein belongs to the MG439/MG440 family.

This is an uncharacterized protein from Mycoplasma pneumoniae (strain ATCC 29342 / M129 / Subtype 1) (Mycoplasmoides pneumoniae).